We begin with the raw amino-acid sequence, 97 residues long: Biogenesis of lysosome-related organelles complex 1 subunit SNN1 (97 aa).

Residues 45–97 adopt a coiled-coil conformation; the sequence is VVRLKQIRNLLKEEQEYYNEEEGLGVERERLEELELRVEKLTQKYKKLLADCV.

This sequence belongs to the SNAPIN family. Component of the biogenesis of lysosome-related organelles complex-1 (BLOC-1).

The protein localises to the endosome. In terms of biological role, component of the biogenesis of lysosome-related organelles complex-1 (BLOC-1), a complex involved in endosomal cargo sorting. This chain is Biogenesis of lysosome-related organelles complex 1 subunit SNN1 (SNN1), found in Lachancea thermotolerans (strain ATCC 56472 / CBS 6340 / NRRL Y-8284) (Yeast).